The sequence spans 118 residues: Ribosome-binding factor A (118 aa).

The protein belongs to the RbfA family. Monomer. Binds 30S ribosomal subunits, but not 50S ribosomal subunits or 70S ribosomes.

Its subcellular location is the cytoplasm. Its function is as follows. One of several proteins that assist in the late maturation steps of the functional core of the 30S ribosomal subunit. Associates with free 30S ribosomal subunits (but not with 30S subunits that are part of 70S ribosomes or polysomes). Required for efficient processing of 16S rRNA. May interact with the 5'-terminal helix region of 16S rRNA. This chain is Ribosome-binding factor A, found in Geobacter metallireducens (strain ATCC 53774 / DSM 7210 / GS-15).